A 549-amino-acid polypeptide reads, in one-letter code: MGPENRRVLLATVLSVAVLIVWQFVFPSPKPKPQPPKPPEAAQRAEAPAAPAPGQPAAQAPAPAVPQDAPEQLVKLVGDGFEATLTSHGGAVKEIVLQGEKFRRDREGKPVQIDLVRVAKEQPYPLAVVATPELGGAEDAGNDVAARAPMRVVAQDARSATFEGRAGKATVRKTYRLTEKAYELALDLEVQAPATQGGGIVVLYPGYMPPDTKKGGFFSGPPVEFVRPVCRAGEETERFDVDGKEAQEKLQGTVAWAGMDQGYFVSAVFPAQPAGTCLFAKGPVQGSGLTALRLPLDGGSAKFGFTVYSGPKDLDHLRTYGREFESAIDYGAMARPFAFFARLLLFVMRWLERLVANWGLAIILLTVLVKVLLYPLTAKSMQSMNEMRKLQPEIEKLKAKHGNDREKLNLATMQLYQQHKVNPLGGCLPMLIQLPIWFALYATLQTSVELYREPFLWIHDLTVKDPLYVLPIAMGVSQYVMQRFSPQPADNAQAKMMLYFMPGFFTLLMLSVPAGLTLYIFVNNLLSIAQQQFMMRRMPAVPAPAKASK.

A helical membrane pass occupies residues 8–28 (VLLATVLSVAVLIVWQFVFPS). Residues 29–39 (PKPKPQPPKPP) are compositionally biased toward pro residues. Positions 29-68 (PKPKPQPPKPPEAAQRAEAPAAPAPGQPAAQAPAPAVPQD) are disordered. Low complexity-rich tracts occupy residues 40-49 (EAAQRAEAPA) and 55-68 (QPAA…VPQD). Transmembrane regions (helical) follow at residues 328-348 (IDYG…LFVM), 354-374 (LVAN…VLLY), 424-444 (LGGC…YATL), and 502-522 (PGFF…YIFV).

The protein belongs to the OXA1/ALB3/YidC family. Type 1 subfamily. Interacts with the Sec translocase complex via SecD. Specifically interacts with transmembrane segments of nascent integral membrane proteins during membrane integration.

It localises to the cell inner membrane. Its function is as follows. Required for the insertion and/or proper folding and/or complex formation of integral membrane proteins into the membrane. Involved in integration of membrane proteins that insert both dependently and independently of the Sec translocase complex, as well as at least some lipoproteins. Aids folding of multispanning membrane proteins. The polypeptide is Membrane protein insertase YidC (Anaeromyxobacter sp. (strain Fw109-5)).